Here is a 65-residue protein sequence, read N- to C-terminus: Small ribosomal subunit protein eS31 (65 aa).

Residues Cys-36, Cys-39, Cys-55, and Cys-58 each contribute to the Zn(2+) site. A C4-type zinc finger spans residues 36 to 58; that stretch reads CPKCGSVMAFHKEPVPRWHCGKC.

This sequence belongs to the eukaryotic ribosomal protein eS31 family. Part of the 30S ribosomal subunit. The cofactor is Zn(2+).

This Pyrobaculum aerophilum (strain ATCC 51768 / DSM 7523 / JCM 9630 / CIP 104966 / NBRC 100827 / IM2) protein is Small ribosomal subunit protein eS31.